Here is a 71-residue protein sequence, read N- to C-terminus: Pro-glucagon (71 aa).

It belongs to the glucagon family.

The protein localises to the secreted. In terms of biological role, plays a key role in glucose metabolism and homeostasis. Regulates blood glucose by increasing gluconeogenesis and decreasing glycolysis. The sequence is that of Pro-glucagon (gcg) from Piaractus mesopotamicus (Small-scaled pacu).